Consider the following 193-residue polypeptide: Pyridoxal 5'-phosphate synthase subunit PdxT (193 aa).

50–52 (GES) contributes to the L-glutamine binding site. Cys82 acts as the Nucleophile in catalysis. L-glutamine contacts are provided by residues Arg109 and 136–137 (IR). Active-site charge relay system residues include His172 and Glu174.

It belongs to the glutaminase PdxT/SNO family. As to quaternary structure, in the presence of PdxS, forms a dodecamer of heterodimers. Only shows activity in the heterodimer.

It carries out the reaction aldehydo-D-ribose 5-phosphate + D-glyceraldehyde 3-phosphate + L-glutamine = pyridoxal 5'-phosphate + L-glutamate + phosphate + 3 H2O + H(+). It catalyses the reaction L-glutamine + H2O = L-glutamate + NH4(+). Its pathway is cofactor biosynthesis; pyridoxal 5'-phosphate biosynthesis. In terms of biological role, catalyzes the hydrolysis of glutamine to glutamate and ammonia as part of the biosynthesis of pyridoxal 5'-phosphate. The resulting ammonia molecule is channeled to the active site of PdxS. This chain is Pyridoxal 5'-phosphate synthase subunit PdxT, found in Streptococcus pneumoniae serotype 2 (strain D39 / NCTC 7466).